The following is a 126-amino-acid chain: MAIIGIGIDVINIFRFKKLIINYGIKIPKKILSKKELIEYSYTHKKEKFLAIRFSIKEAIAKAIGISIFKNNFLNNCEIFYNKKKKIQLTTLGYIKKIFKKSQVKKIFLSVTDSNKHTYAIAILEK.

Mg(2+) contacts are provided by aspartate 9 and glutamate 58.

The protein belongs to the P-Pant transferase superfamily. AcpS family. Requires Mg(2+) as cofactor.

It is found in the cytoplasm. The catalysed reaction is apo-[ACP] + CoA = holo-[ACP] + adenosine 3',5'-bisphosphate + H(+). In terms of biological role, transfers the 4'-phosphopantetheine moiety from coenzyme A to a Ser of acyl-carrier-protein. The protein is Holo-[acyl-carrier-protein] synthase of Buchnera aphidicola subsp. Cinara cedri (strain Cc).